Reading from the N-terminus, the 174-residue chain is Adenylate kinase (174 aa).

An NMP region spans residues S12–V41. AMP is bound by residues T13, R18, G39 to V41, G67 to R70, and Q74. Residues G104–D141 are LID. Residues R105 and T114 to Y115 contribute to the ATP site. The AMP site is built by R138 and R149.

This sequence belongs to the adenylate kinase family. Monomer.

The protein resides in the cytoplasm. It catalyses the reaction AMP + ATP = 2 ADP. It participates in purine metabolism; AMP biosynthesis via salvage pathway; AMP from ADP: step 1/1. Catalyzes the reversible transfer of the terminal phosphate group between ATP and AMP. Plays an important role in cellular energy homeostasis and in adenine nucleotide metabolism. The chain is Adenylate kinase from Neisseria lactamica.